A 473-amino-acid chain; its full sequence is Ribosomal RNA small subunit methyltransferase F (473 aa).

Residues 124 to 130, Glu148, Asp175, and Asp193 contribute to the S-adenosyl-L-methionine site; that span reads ASAPGSK. Cys246 serves as the catalytic Nucleophile.

It belongs to the class I-like SAM-binding methyltransferase superfamily. RsmB/NOP family.

The protein resides in the cytoplasm. The catalysed reaction is cytidine(1407) in 16S rRNA + S-adenosyl-L-methionine = 5-methylcytidine(1407) in 16S rRNA + S-adenosyl-L-homocysteine + H(+). Specifically methylates the cytosine at position 1407 (m5C1407) of 16S rRNA. The sequence is that of Ribosomal RNA small subunit methyltransferase F from Aliivibrio fischeri (strain ATCC 700601 / ES114) (Vibrio fischeri).